A 336-amino-acid chain; its full sequence is Toluate 1,2-dioxygenase electron transfer component (336 aa).

Residues 3–97 form the 2Fe-2S ferredoxin-type domain; sequence HKVATDFEDG…DCVIRVPAAS (95 aa). Positions 40, 45, 48, and 81 each coordinate [2Fe-2S] cluster. Positions 99-336 are ferredoxin-reductase; the sequence is VCKTQQAGYQ…FYYEKFAASA (238 aa). Positions 104–204 constitute an FAD-binding FR-type domain; sequence QAGYQAAISN…AGPLGAFYLR (101 aa).

Belongs to the bacterial ring-hydroxylating dioxygenase ferredoxin reductase family. In terms of assembly, this dioxygenase system consists of three proteins: the two subunits of the hydroxylase component (XylX and XylY), and an electron transfer component (XylZ). FAD is required as a cofactor. [2Fe-2S] cluster serves as cofactor.

It carries out the reaction 2 reduced [2Fe-2S]-[ferredoxin] + NAD(+) + H(+) = 2 oxidized [2Fe-2S]-[ferredoxin] + NADH. In terms of biological role, electron transfer component of toluate 1,2-dioxygenase system. This is Toluate 1,2-dioxygenase electron transfer component (xylZ) from Pseudomonas putida (Arthrobacter siderocapsulatus).